Consider the following 440-residue polypeptide: Sorting nexin-31 (440 aa).

The region spanning 1–109 (MKMHFCIPVS…EFLKLAQLNT (109 aa)) is the PX domain.

Belongs to the sorting nexin family. In terms of assembly, interacts with CCDC22, CCDC93, VPS26C and VPS35L, associates with the retriever and CCC complexes.

Its function is as follows. May be involved in protein trafficking. In Homo sapiens (Human), this protein is Sorting nexin-31 (SNX31).